The following is a 177-amino-acid chain: Bifunctional protein PyrR (177 aa).

Positions 99–111 (LVLIDDVIYKGRT) match the PRPP-binding motif.

This sequence belongs to the purine/pyrimidine phosphoribosyltransferase family. PyrR subfamily.

It carries out the reaction UMP + diphosphate = 5-phospho-alpha-D-ribose 1-diphosphate + uracil. Regulates the transcription of the pyrimidine nucleotide (pyr) operon in response to exogenous pyrimidines. Functionally, also displays a weak uracil phosphoribosyltransferase activity which is not physiologically significant. The polypeptide is Bifunctional protein PyrR (Picosynechococcus sp. (strain ATCC 27264 / PCC 7002 / PR-6) (Agmenellum quadruplicatum)).